Here is a 241-residue protein sequence, read N- to C-terminus: Serine protease 58 (241 aa).

A signal peptide spans 1-17 (MKFILLWALLNLTVALA). Residues 18–239 (FNPDYTVSST…YIPWIENVIQ (222 aa)) form the Peptidase S1 domain. Cys-41 and Cys-57 form a disulfide bridge. Catalysis depends on charge relay system residues His-56 and Asp-101. Disulfide bonds link Cys-133-Cys-201, Cys-165-Cys-180, and Cys-191-Cys-215. Asn-156 and Asn-173 each carry an N-linked (GlcNAc...) asparagine glycan. The active-site Charge relay system is Ser-195.

The protein belongs to the peptidase S1 family.

Its subcellular location is the secreted. It carries out the reaction Preferential cleavage: Arg-|-Xaa, Lys-|-Xaa.. This Homo sapiens (Human) protein is Serine protease 58 (PRSS58).